The primary structure comprises 358 residues: Carbamoyl phosphate synthase small chain (358 aa).

CPSase stretches follow at residues 1-168 (MYNR…PALG) and 1-171 (MYNR…GRGR). L-glutamine-binding residues include S46, G220, and G222. The Glutamine amidotransferase type-1 domain maps to 172-358 (RVVLVDLGMK…FIKNIDNNMK (187 aa)). The active-site Nucleophile is C247. L-glutamine is bound by residues M248, Q251, N289, G291, and Y292. Active-site residues include H332 and E334.

It belongs to the CarA family. As to quaternary structure, composed of two chains; the small (or glutamine) chain promotes the hydrolysis of glutamine to ammonia, which is used by the large (or ammonia) chain to synthesize carbamoyl phosphate. Tetramer of heterodimers (alpha,beta)4.

The catalysed reaction is hydrogencarbonate + L-glutamine + 2 ATP + H2O = carbamoyl phosphate + L-glutamate + 2 ADP + phosphate + 2 H(+). It catalyses the reaction L-glutamine + H2O = L-glutamate + NH4(+). It participates in amino-acid biosynthesis; L-arginine biosynthesis; carbamoyl phosphate from bicarbonate: step 1/1. The protein operates within pyrimidine metabolism; UMP biosynthesis via de novo pathway; (S)-dihydroorotate from bicarbonate: step 1/3. Functionally, small subunit of the glutamine-dependent carbamoyl phosphate synthetase (CPSase). CPSase catalyzes the formation of carbamoyl phosphate from the ammonia moiety of glutamine, carbonate, and phosphate donated by ATP, constituting the first step of 2 biosynthetic pathways, one leading to arginine and/or urea and the other to pyrimidine nucleotides. The small subunit (glutamine amidotransferase) binds and cleaves glutamine to supply the large subunit with the substrate ammonia. The protein is Carbamoyl phosphate synthase small chain of Fusobacterium nucleatum subsp. nucleatum (strain ATCC 25586 / DSM 15643 / BCRC 10681 / CIP 101130 / JCM 8532 / KCTC 2640 / LMG 13131 / VPI 4355).